Reading from the N-terminus, the 156-residue chain is MSQFDVTVFTDGSCLGNPGPGGWAAIMRCNGCEKELSGGFALTTNNRMEILAVLEALEALRDPCKVTLFTDSQYVRNAVEKKWLAGWQRNGWKTADKKPVKNRDLWERLVPLLAKHSVSFRWVRGHSGHPENERCDVLARAQASRRGLPEDPGFTA.

The RNase H type-1 domain occupies 2–144; the sequence is SQFDVTVFTD…CDVLARAQAS (143 aa). Mg(2+)-binding residues include Asp-11, Glu-49, Asp-71, and Asp-136.

It belongs to the RNase H family. Monomer. Mg(2+) is required as a cofactor.

Its subcellular location is the cytoplasm. It catalyses the reaction Endonucleolytic cleavage to 5'-phosphomonoester.. Functionally, endonuclease that specifically degrades the RNA of RNA-DNA hybrids. This chain is Ribonuclease H, found in Nitratidesulfovibrio vulgaris (strain ATCC 29579 / DSM 644 / CCUG 34227 / NCIMB 8303 / VKM B-1760 / Hildenborough) (Desulfovibrio vulgaris).